A 204-amino-acid polypeptide reads, in one-letter code: Small rubber particle protein (204 aa).

Belongs to the REF/SRPP family. As to quaternary structure, auto-assembles in solution into stable nanomultimers of a globular nature. Not glycosylated. Post-translationally, the N-terminus is blocked. In terms of processing, consistent shifts of about 266 Da observed by MS in various forms of the intact protein suggest the addition of stearolyl groups. As to expression, highly expressed in the specialized vessel laticifers, but localized only in the laticifer layers in the conducting phloem. Also detected in leaves.

It is found in the cytoplasm. Its function is as follows. Involved in the biosynthesis of rubber, an isoprenoid polymer (cis-1,4-polyisoprene). In Hevea brasiliensis (Para rubber tree), this protein is Small rubber particle protein.